The chain runs to 703 residues: Prolyl 3-hydroxylase 2 (703 aa).

The N-terminal stretch at 1-21 is a signal peptide; it reads MRESTWVSLLLLLLLPTPQRG. The disordered stretch occupies residues 17–40; that stretch reads TPQRGGPQDGRRSPEPEPERGPLQ. Residues 25-36 show a composition bias toward basic and acidic residues; sequence DGRRSPEPEPER. TPR repeat units follow at residues 42 to 75, 144 to 177, 205 to 238, and 301 to 334; these read FDLL…HRRL, RVPY…NPEH, HLES…YFNE, and PLHY…HPDN. Asparagine 444 and asparagine 544 each carry an N-linked (GlcNAc...) asparagine glycan. Positions 552-666 constitute a Fe2OG dioxygenase domain; the sequence is THMVCRTALS…RCAVALWFTL (115 aa). The Fe cation site is built by histidine 575, aspartate 577, and histidine 647. Residue arginine 657 is part of the active site. The Prevents secretion from ER motif lies at 700–703; it reads KDEL.

Belongs to the leprecan family. Requires Fe cation as cofactor. It depends on L-ascorbate as a cofactor. In terms of tissue distribution, detected in kidney. Detected on kidney tubular cells, pancreas acinar cells, Schwann cells of the peripheral nerve in the pinna, and in tunica adventitia, the smooth muscle layer of the aortic wall (at protein level). Detected in lung, skeletal muscle and kidney. Detected in kidney glomeruli and in prehypertrophic regions of long bone from neonates. In the eye, detected in the epithelial layer of the cornea and at lower levels in the sclera at the posterior end of the eye.

Its subcellular location is the endoplasmic reticulum. The protein resides in the sarcoplasmic reticulum. The protein localises to the golgi apparatus. The catalysed reaction is L-prolyl-[collagen] + 2-oxoglutarate + O2 = trans-3-hydroxy-L-prolyl-[collagen] + succinate + CO2. Its function is as follows. Prolyl 3-hydroxylase that catalyzes the post-translational formation of 3-hydroxyproline on collagens. Contributes to proline 3-hydroxylation of collagen COL4A1 and COL1A1 in tendons, the eye sclera and in the eye lens capsule. Has high activity with the type IV collagen COL4A1, and lower activity with COL1A1. Catalyzes hydroxylation of the first Pro in Gly-Pro-Hyp sequences where Hyp is 4-hydroxyproline. Has no activity on substrates that have proline instead of 4-hydroxyproline in the third position. The polypeptide is Prolyl 3-hydroxylase 2 (Mus musculus (Mouse)).